Reading from the N-terminus, the 1489-residue chain is Sex-determining transformer protein 2 (1489 aa).

Residues 1–33 form the signal peptide; that stretch reads MKLAFNKLLVASVVFTVLSFGLLLASLFTTTAT. A run of 11 helical transmembrane segments spans residues 454–474, 489–509, 513–533, 600–620, 622–642, 749–769, 931–951, 958–978, 986–1006, 1041–1061, and 1066–1086; these read MIYFILGACALMVALFAAFAF, GFITGLLFIFLCKSGGLILID, LCYITMHLAFNLVMTARVTFI, YWFLIAIVLVPVIGVYWFFID, DVQKICIVLLPAFLIAAFEEM, AVVVSSVAALLILLSIGLLFI, IFAAAVLAGFFSIIVVFFSIG, LAFAFFVVGNRLEIAAIVSLF, YTNVAVFVGFLAAWTPFCDLA, VQIFAIFLTATILLIVITAII, and AFFIPTVILLITLLLAVFNSL. Residues 1138 to 1288 form an interaction with fem-3 region; the sequence is EFSIRPTENT…EQQEVTDDVA (151 aa). Disordered regions lie at residues 1143-1176, 1233-1393, and 1412-1489; these read PTENTKHYAPRPIDNSDPPEQAADEEVVNQDPSM, LLRQ…YPPS, and RNLP…TPGL. Composition is skewed to basic and acidic residues over residues 1275–1298, 1326–1340, and 1423–1433; these read DPAKEQQEVTDDVATRYKEEEVRK, VSREAPEDSPNREPR, and RPRDWDQRRLV. The interval 1402 to 1423 is MX regulatory domain; required for tra-1 binding; the sequence is CEDVYWKYNERNLPDNVPMPPR. Pro residues predominate over residues 1444 to 1456; sequence VPPPGRSAIPIPP. Basic and acidic residues predominate over residues 1460–1482; the sequence is RLRERRREQHLREQEARRNRPES.

In terms of assembly, interacts with tra-1 and fem-3.

The protein localises to the membrane. Its function is as follows. Plays a major role in controlling sexual cell fates. Promotes female development in XX animals where it sequesters one or more of the FEM proteins to the membrane thereby freeing the tra-1 protein (a putative transcription factor) to enter the nucleus and promote female development. In XO animals it acts as a receptor for her-1 which prevents it from binding to FEM proteins thereby repressing the activity of tra-1. Negatively regulates male development when bound to fem-3 and is required together with tra-1 for promoting spermatogenesis. Also required for feminizing tra-3 activity. The protein is Sex-determining transformer protein 2 of Caenorhabditis briggsae.